The primary structure comprises 431 residues: Enolase (431 aa).

Position 175 (glutamine 175) interacts with (2R)-2-phosphoglycerate. Glutamate 217 functions as the Proton donor in the catalytic mechanism. 3 residues coordinate Mg(2+): aspartate 254, glutamate 295, and aspartate 322. Lysine 347, arginine 376, serine 377, and lysine 398 together coordinate (2R)-2-phosphoglycerate. Lysine 347 serves as the catalytic Proton acceptor.

It belongs to the enolase family. It depends on Mg(2+) as a cofactor.

Its subcellular location is the cytoplasm. It is found in the secreted. The protein resides in the cell surface. It catalyses the reaction (2R)-2-phosphoglycerate = phosphoenolpyruvate + H2O. Its pathway is carbohydrate degradation; glycolysis; pyruvate from D-glyceraldehyde 3-phosphate: step 4/5. Catalyzes the reversible conversion of 2-phosphoglycerate (2-PG) into phosphoenolpyruvate (PEP). It is essential for the degradation of carbohydrates via glycolysis. This Anaplasma marginale (strain St. Maries) protein is Enolase.